Here is an 844-residue protein sequence, read N- to C-terminus: Translation elongation factor 2 (844 aa).

In terms of domain architecture, tr-type G spans Arg17–Val348. Ala26–Ser33 serves as a coordination point for GTP. A phosphothreonine mark is found at Thr57 and Thr59. Residues Asn162–Asp165 and Ser219–Leu221 each bind GTP. Ser488 is subject to Phosphoserine. Position 701 is a diphthamide (His701).

This sequence belongs to the TRAFAC class translation factor GTPase superfamily. Classic translation factor GTPase family. EF-G/EF-2 subfamily. Phosphorylation by EF-2 kinase completely inactivates EF-2.

The protein resides in the cytoplasm. It catalyses the reaction GTP + H2O = GDP + phosphate + H(+). Functionally, catalyzes the GTP-dependent ribosomal translocation step during translation elongation. During this step, the ribosome changes from the pre-translocational (PRE) to the post-translocational (POST) state as the newly formed A-site-bound peptidyl-tRNA and P-site-bound deacylated tRNA move to the P and E sites, respectively. Catalyzes the coordinated movement of the two tRNA molecules, the mRNA and conformational changes in the ribosome. This chain is Translation elongation factor 2, found in Bombyx mori (Silk moth).